The primary structure comprises 577 residues: Pentatricopeptide repeat-containing protein At2g01390 (577 aa).

PPR repeat units follow at residues 121–155, 156–190, 191–225, 226–260, 261–295, 382–416, 417–451, 452–482, 485–519, and 520–554; these read DHFT…GVLI, DTVT…GCEP, TVVS…RVSP, NCHT…GVQP, DKAA…GVVL, DSFV…GIHL, KKSA…QHSL, GCYQ…LPDD, GVAA…EIMP, and SLGT…LVAS.

It belongs to the PPR family. P subfamily.

This Arabidopsis thaliana (Mouse-ear cress) protein is Pentatricopeptide repeat-containing protein At2g01390.